The primary structure comprises 503 residues: uncharacterized protein (503 aa).

Transmembrane regions (helical) follow at residues 20–40 (FIAF…VLTM), 43–63 (LGPF…GVML), 106–126 (VSLT…LSFA), 138–158 (LIGL…ISLF), 166–186 (AILF…ILGI), 215–235 (VIST…LTAI), 249–269 (LLMF…ISGI), 301–321 (YLGI…SLAS), 359–379 (VWAS…VPFL), 405–425 (LAVL…FMIL), 443–463 (GVSF…ITAW), and 468–488 (TFKL…FIHS).

This sequence to M.genitalium MG225.

Its subcellular location is the cell membrane. This is an uncharacterized protein from Mycoplasma pneumoniae (strain ATCC 29342 / M129 / Subtype 1) (Mycoplasmoides pneumoniae).